The chain runs to 556 residues: Arginine--tRNA ligase (556 aa).

Residues 132–142 (ANPTGDLHLGH) carry the 'HIGH' region motif.

Belongs to the class-I aminoacyl-tRNA synthetase family. As to quaternary structure, monomer.

It localises to the cytoplasm. It catalyses the reaction tRNA(Arg) + L-arginine + ATP = L-arginyl-tRNA(Arg) + AMP + diphosphate. This is Arginine--tRNA ligase from Listeria monocytogenes serotype 4a (strain HCC23).